The sequence spans 438 residues: Probable tRNA pseudouridine synthase D (438 aa).

Asp-86 functions as the Nucleophile in the catalytic mechanism. The TRUD domain maps to 165-390 (GVPNFFGIQR…SKGTRRELLL (226 aa)).

Belongs to the pseudouridine synthase TruD family.

It carries out the reaction uridine(13) in tRNA = pseudouridine(13) in tRNA. Functionally, could be responsible for synthesis of pseudouridine from uracil-13 in transfer RNAs. In Methanosarcina barkeri (strain Fusaro / DSM 804), this protein is Probable tRNA pseudouridine synthase D.